The following is a 432-amino-acid chain: Adenylosuccinate synthetase (432 aa).

GTP-binding positions include 13 to 19 (GDEGKGK) and 41 to 43 (GHT). D14 serves as the catalytic Proton acceptor. D14 and G41 together coordinate Mg(2+). IMP-binding positions include 14–17 (DEGK), 39–42 (NAGH), T130, R144, Q225, T240, and R304. Catalysis depends on H42, which acts as the Proton donor. Residue 300–306 (ATTGRRR) coordinates substrate. GTP-binding positions include R306, 332–334 (KLD), and 415–417 (STG).

This sequence belongs to the adenylosuccinate synthetase family. In terms of assembly, homodimer. Mg(2+) is required as a cofactor.

Its subcellular location is the cytoplasm. The enzyme catalyses IMP + L-aspartate + GTP = N(6)-(1,2-dicarboxyethyl)-AMP + GDP + phosphate + 2 H(+). It functions in the pathway purine metabolism; AMP biosynthesis via de novo pathway; AMP from IMP: step 1/2. Functionally, plays an important role in the de novo pathway of purine nucleotide biosynthesis. Catalyzes the first committed step in the biosynthesis of AMP from IMP. This Salmonella heidelberg (strain SL476) protein is Adenylosuccinate synthetase.